Reading from the N-terminus, the 297-residue chain is Bifunctional protein FolD 1 (297 aa).

NADP(+) is bound by residues 164–166 (GRS) and Thr230.

The protein belongs to the tetrahydrofolate dehydrogenase/cyclohydrolase family. As to quaternary structure, homodimer.

The catalysed reaction is (6R)-5,10-methylene-5,6,7,8-tetrahydrofolate + NADP(+) = (6R)-5,10-methenyltetrahydrofolate + NADPH. It carries out the reaction (6R)-5,10-methenyltetrahydrofolate + H2O = (6R)-10-formyltetrahydrofolate + H(+). The protein operates within one-carbon metabolism; tetrahydrofolate interconversion. Catalyzes the oxidation of 5,10-methylenetetrahydrofolate to 5,10-methenyltetrahydrofolate and then the hydrolysis of 5,10-methenyltetrahydrofolate to 10-formyltetrahydrofolate. The polypeptide is Bifunctional protein FolD 1 (Rhodococcus jostii (strain RHA1)).